The chain runs to 348 residues: MPTLVNGPRRDSTEGFDTDIITLPRFIIEHQKQFKNATGDFTLVLNALQFAFKFVSHTIRRAELVNLVGLAGASNFTGDQQKKLDVLGDEIFINAMRASGIIKVLVSEEQEDLIVFPTNTGSYAVCCDPIDGSSNLDAGVSVGTIASIFRLLPDSSGTINDVLRCGKEMVAACYAMYGSSTHLVLTLGDGVDGFTLDTNLGEFILTHPNLRIPPQKAIYSINEGNTLYWNETIRTFIEKVKQPQADNNNKPFSARYVGSMVADVHRTFLYGGLFAYPCDKKSPNGKLRLLYEAFPMAFLMEQAGGKAVNDRGERILDLVPSHIHDKSSIWLGSSGEIDKFLDHIGKSQ.

A Pro/N-degron motif is present at residues Pro-2–Val-5. A Phosphoserine modification is found at Ser-12. Residues Ile-27–Gln-31 and Thr-38–Thr-42 contribute to the AMP site. Residues Asp-79 and Glu-108 each contribute to the Mg(2+) site. Ser-122–Tyr-123 serves as a coordination point for AMP. The Mg(2+) site is built by Asp-128, Ile-130, and Asp-131. Position 131-134 (Asp-131–Ser-134) interacts with substrate. Residue Arg-150 participates in AMP binding. Residues Asn-222–Asn-225, Arg-255–Met-260, Tyr-276, and Lys-286–Arg-288 contribute to the substrate site. Glu-292 serves as a coordination point for Mg(2+).

Belongs to the FBPase class 1 family. Homotetramer. The cofactor is Mg(2+). In terms of processing, ubiquitinated. Targeted for proteasomal degradation when cells are shifted to glucose-containing growth medium.

The catalysed reaction is beta-D-fructose 1,6-bisphosphate + H2O = beta-D-fructose 6-phosphate + phosphate. It participates in carbohydrate biosynthesis; gluconeogenesis. Subject to complex allosteric regulation. The enzyme can assume an active R-state, or an inactive T-state. Intermediate conformations may exist. AMP acts as allosteric inhibitor. AMP binding affects the turnover of bound substrate and not the affinity for substrate. The polypeptide is Fructose-1,6-bisphosphatase (FBP1) (Saccharomyces cerevisiae (strain ATCC 204508 / S288c) (Baker's yeast)).